Consider the following 218-residue polypeptide: Probable nicotinate-nucleotide adenylyltransferase (218 aa).

This sequence belongs to the NadD family.

It carries out the reaction nicotinate beta-D-ribonucleotide + ATP + H(+) = deamido-NAD(+) + diphosphate. It functions in the pathway cofactor biosynthesis; NAD(+) biosynthesis; deamido-NAD(+) from nicotinate D-ribonucleotide: step 1/1. Catalyzes the reversible adenylation of nicotinate mononucleotide (NaMN) to nicotinic acid adenine dinucleotide (NaAD). This is Probable nicotinate-nucleotide adenylyltransferase from Helicobacter hepaticus (strain ATCC 51449 / 3B1).